A 240-amino-acid polypeptide reads, in one-letter code: Probable metal transport system ATP-binding protein TM_0124 (240 aa).

In terms of domain architecture, ABC transporter spans 4-223 (VEVKNLTYRI…LKKIFTDFDI (220 aa)). Residue 36-43 (GPNGAGKT) coordinates ATP.

This sequence belongs to the ABC transporter superfamily.

In terms of biological role, part of an ATP-driven transport system TM_0123/TM_0124/TM_0125 for a metal. Probably responsible for energy coupling to the transport system. This chain is Probable metal transport system ATP-binding protein TM_0124, found in Thermotoga maritima (strain ATCC 43589 / DSM 3109 / JCM 10099 / NBRC 100826 / MSB8).